We begin with the raw amino-acid sequence, 703 residues long: Calpain-8 (703 aa).

One can recognise a Calpain catalytic domain in the interval 45 to 344; that stretch reads LFKDPEFPAC…FSRLEICNLS (300 aa). Catalysis depends on residues C105, H262, and N286. The segment at 355 to 512 is domain III; it reads KWNLVLFNGR…VFSEKKAQAL (158 aa). A linker region spans residues 513-531; it reads EIGDAVPGDPHEPHPRDMD. 4 consecutive EF-hand domains span residues 531-566, 575-610, 605-640, and 670-703; these read DGED…LLSK, FNIN…ICKY, LKIC…AGFT, and IRLE…RALV. Positions 532–703 are domain IV; it reads GEDEHFWSLS…LAEWLCRALV (172 aa). Residues D588, D590, T592, S594, E599, D618, S620, T624, and E629 each coordinate Ca(2+).

It belongs to the peptidase C2 family. As to quaternary structure, monomer and homooligomer. Interacts with COPS1/GPS1, COPB1, EYA2, NME2, NME4 and TOMM70. Ca(2+) serves as cofactor. Post-translationally, undergoes autolytic cleavage between Ala-5 and Ala-6 which gives rise to fragments extending from Ala-6 to the C-terminus, Ala-6 to the EF-hand 2 domain and from Ala-6 to the beginning of domain III. In terms of tissue distribution, predominantly expressed in the stomach. Localizes strictly to the surface mucus cells in the gastric epithelium and the mucus-secreting goblet cells in the duodenum.

It is found in the cytoplasm. It localises to the golgi apparatus. The enzyme catalyses Broad endopeptidase specificity.. Its activity is regulated as follows. The concentration of calcium for half-maximal activity is 0.3 mM. Inhibited by calpastatin and calpeptin. Functionally, calcium-regulated non-lysosomal thiol-protease. Involved in membrane trafficking in the gastric surface mucus cells (pit cells) and may involve the membrane trafficking of mucus cells via interactions with coat protein. Proteolytically cleaves the beta-subunit of coatomer complex. The sequence is that of Calpain-8 (Capn8) from Mus musculus (Mouse).